Consider the following 272-residue polypeptide: Ethanolamine ammonia-lyase small subunit (272 aa).

Residues valine 161, glutamate 182, and cysteine 211 each coordinate adenosylcob(III)alamin.

It belongs to the EutC family. In terms of assembly, the basic unit is a heterodimer which dimerizes to form tetramers. The heterotetramers trimerize; 6 large subunits form a core ring with 6 small subunits projecting outwards. Adenosylcob(III)alamin serves as cofactor.

The protein localises to the bacterial microcompartment. The enzyme catalyses ethanolamine = acetaldehyde + NH4(+). It functions in the pathway amine and polyamine degradation; ethanolamine degradation. In terms of biological role, catalyzes the deamination of various vicinal amino-alcohols to oxo compounds. Allows this organism to utilize ethanolamine as the sole source of nitrogen and carbon in the presence of external vitamin B12. In Pseudomonas putida (strain W619), this protein is Ethanolamine ammonia-lyase small subunit.